Reading from the N-terminus, the 242-residue chain is Uridylate kinase (242 aa).

17 to 20 (KLSG) contributes to the ATP binding site. Gly59 contacts UMP. ATP contacts are provided by Gly60 and Arg64. UMP is bound by residues Asp79 and 140 to 147 (LGNPFFTT). Thr167, Tyr173, and Asp176 together coordinate ATP.

It belongs to the UMP kinase family. As to quaternary structure, homohexamer.

Its subcellular location is the cytoplasm. It catalyses the reaction UMP + ATP = UDP + ADP. It participates in pyrimidine metabolism; CTP biosynthesis via de novo pathway; UDP from UMP (UMPK route): step 1/1. Inhibited by UTP. Functionally, catalyzes the reversible phosphorylation of UMP to UDP. The polypeptide is Uridylate kinase (Buchnera aphidicola subsp. Baizongia pistaciae (strain Bp)).